The primary structure comprises 370 residues: Mitogen-activated protein kinase 3 (370 aa).

A Protein kinase domain is found at 38–324 (RPPIIPIGRG…VEQALNHQYL (287 aa)). Residues 44–52 (IGRGAYGIV) and K67 contribute to the ATP site. The active-site Proton acceptor is D164. T196 bears the Phosphothreonine mark. Positions 196-198 (TEY) match the TXY motif. A Phosphotyrosine modification is found at Y198. Residue T201 is modified to Phosphothreonine.

This sequence belongs to the protein kinase superfamily. CMGC Ser/Thr protein kinase family. MAP kinase subfamily. In terms of assembly, interacts with DSPTP1B/MKP2, NDPK2 and VIP1. The interaction with DSPTP1B/MKP2 is repressed by fungal elicitation. Binds to LIP5. Interacts with VQ4. Interacts with RACK1A, RACK1B and RACK1C. Interacts with FLZ9. Interacts with MKK5. Post-translationally, dually phosphorylated on Thr-196 and Tyr-198, which activates the enzyme. Dephosphorylated by DSPTP1B/MKP2.

The protein resides in the cytoplasm. The protein localises to the nucleus. It localises to the cell cortex. It catalyses the reaction L-seryl-[protein] + ATP = O-phospho-L-seryl-[protein] + ADP + H(+). It carries out the reaction L-threonyl-[protein] + ATP = O-phospho-L-threonyl-[protein] + ADP + H(+). Activated by threonine and tyrosine phosphorylation. Activated by MAP kinase kinases MKK4, MKK5, MKK7 and MKK9. Activated in response to hydrogen peroxide, ozone, salt stress and flagellin bacterial elicitor. Triggered by Agrobacterium upon T-DNA transfer. Repressed by DSPTP1B/MKP2-mediated dephosphorylation. Involved in oxidative stress-mediated signaling cascade (such as ozone). Involved in the innate immune MAP kinase signaling cascade (MEKK1, MKK4/MKK5 and MPK3/MPK6) downstream of bacterial flagellin receptor FLS2. May be involved in hypersensitive response (HR)-mediated signaling cascade by modulating LIP5 phosphorylation and subsequent multivesicular bodies (MVBs) trafficking. May phosphorylate regulators of WRKY transcription factors. Mediates the phosphorylation of VIP1 and subsequent stress genes transcription in response to Agrobacterium. MKK9-MPK3/MPK6 module phosphorylates and activates EIN3, leading to the promotion of EIN3-mediated transcription in ethylene signaling. MPK3/MPK6 cascade regulates camalexin synthesis through transcriptional regulation of the biosynthetic genes after pathogen infection. YDA-MKK4/MKK5-MPK3/MPK6 module regulates stomatal cell fate before the guard mother cell (GMC) is specified. When activated, reinforces the feedback loop by phosphorylating BASL, and inhibits stomatal fate by phosphorylating SPCH. This MAPK cascade also functions downstream of the ER receptor in regulating coordinated local cell proliferation, which shapes the morphology of plant organs. This Arabidopsis thaliana (Mouse-ear cress) protein is Mitogen-activated protein kinase 3.